Reading from the N-terminus, the 435-residue chain is Indole diterpene prenyltransferase atmD (435 aa).

Residues 81–82 (AY) and Glu90 contribute to the L-tryptophan site. Substrate contacts are provided by Arg103, Lys190, Arg261, Lys263, Tyr265, Tyr346, and Tyr413.

This sequence belongs to the tryptophan dimethylallyltransferase family.

Its function is as follows. Indole diterpene prenyltransferase; part of the ATM2 gene cluster that mediates the biosynthesis of aflatrem, a tremorgenic mycotoxin with acute neurotoxic effects. Synthesis of geranylgeranyl diphosphate (GGPP) by AtmG (a GGPP synthase) precedes condensation of GGPP with indole 3-glycerol phosphate, followed by epoxidation and cyclization by AtmM (a FAD-dependent monooxygenase) and AtmC (a prenyltransferase) to produce paspaline. AtmB is also essential for paspaline production, but its exact role has not been identified yet. AtmP, a cytochrome P450 monooxygenase, subsequently converts paspaline to 13-desoxypaxilline via PC-M6 by removal of the C-30 methyl group and oxidation at C-10. AtmQ, a cytochrome P450 monooxygenase, then catalyzes the oxidation of 13-desoxypaxilline, first at C-7 to produce paspalicine and then at C-13 to form paspalinine. Finally, AtmD prenylates paspalinine to form aflatrem. The chain is Indole diterpene prenyltransferase atmD from Aspergillus flavus.